A 342-amino-acid polypeptide reads, in one-letter code: N-acetyl-gamma-glutamyl-phosphate reductase (342 aa).

Cys149 is a catalytic residue.

It belongs to the NAGSA dehydrogenase family. Type 1 subfamily.

Its subcellular location is the cytoplasm. The enzyme catalyses N-acetyl-L-glutamate 5-semialdehyde + phosphate + NADP(+) = N-acetyl-L-glutamyl 5-phosphate + NADPH + H(+). The protein operates within amino-acid biosynthesis; L-arginine biosynthesis; N(2)-acetyl-L-ornithine from L-glutamate: step 3/4. Functionally, catalyzes the NADPH-dependent reduction of N-acetyl-5-glutamyl phosphate to yield N-acetyl-L-glutamate 5-semialdehyde. The protein is N-acetyl-gamma-glutamyl-phosphate reductase of Aromatoleum aromaticum (strain DSM 19018 / LMG 30748 / EbN1) (Azoarcus sp. (strain EbN1)).